A 347-amino-acid chain; its full sequence is 4-hydroxy-tetrahydrodipicolinate reductase 1, chloroplastic (347 aa).

Residues 1 to 51 (MATNGLMASSSVFLHRPRIAFASRTNQTVGKYGKGRVSFMGIGTRRLPVVL) constitute a chloroplast transit peptide. Serine 52 bears the N-acetylserine mark. NAD(+) contacts are provided by residues 79-84 (GCSGKM), 171-173 (GTT), and 194-197 (SPQM). Histidine 230 functions as the Proton donor/acceptor in the catalytic mechanism. Lysine 234 functions as the Proton donor in the catalytic mechanism. 239–240 (GT) serves as a coordination point for (S)-2,3,4,5-tetrahydrodipicolinate.

The protein belongs to the DapB family.

Its subcellular location is the plastid. The protein resides in the chloroplast. The catalysed reaction is (S)-2,3,4,5-tetrahydrodipicolinate + NAD(+) + H2O = (2S,4S)-4-hydroxy-2,3,4,5-tetrahydrodipicolinate + NADH + H(+). The enzyme catalyses (S)-2,3,4,5-tetrahydrodipicolinate + NADP(+) + H2O = (2S,4S)-4-hydroxy-2,3,4,5-tetrahydrodipicolinate + NADPH + H(+). It functions in the pathway amino-acid biosynthesis; L-lysine biosynthesis via DAP pathway; (S)-tetrahydrodipicolinate from L-aspartate: step 4/4. Its function is as follows. Catalyzes the conversion of 4-hydroxy-tetrahydrodipicolinate (HTPA) to tetrahydrodipicolinate. The sequence is that of 4-hydroxy-tetrahydrodipicolinate reductase 1, chloroplastic (DAPB1) from Arabidopsis thaliana (Mouse-ear cress).